The sequence spans 155 residues: Ribosomal RNA large subunit methyltransferase H (155 aa).

Residues leucine 72, glycine 103, and 122–127 each bind S-adenosyl-L-methionine; that span reads LSALTL.

Belongs to the RNA methyltransferase RlmH family. In terms of assembly, homodimer.

The protein resides in the cytoplasm. The catalysed reaction is pseudouridine(1915) in 23S rRNA + S-adenosyl-L-methionine = N(3)-methylpseudouridine(1915) in 23S rRNA + S-adenosyl-L-homocysteine + H(+). Functionally, specifically methylates the pseudouridine at position 1915 (m3Psi1915) in 23S rRNA. The protein is Ribosomal RNA large subunit methyltransferase H of Salmonella dublin (strain CT_02021853).